The following is a 555-amino-acid chain: Trehalase (555 aa).

The N-terminal stretch at methionine 1–glutamine 16 is a signal peptide. The N-linked (GlcNAc...) asparagine glycan is linked to asparagine 46. Substrate is bound by residues arginine 164, tryptophan 171 to aspartate 172, and asparagine 208. Asparagine 216 is a glycosylation site (N-linked (GlcNAc...) asparagine). Substrate-binding positions include arginine 217 to glutamine 219, arginine 282 to glutamate 284, and glycine 316. The active-site Proton donor/acceptor is the aspartate 318. 2 N-linked (GlcNAc...) asparagine glycosylation sites follow: asparagine 334 and asparagine 371. The Proton donor/acceptor role is filled by glutamate 516. Glutamate 531 provides a ligand contact to substrate.

The protein belongs to the glycosyl hydrolase 37 family. In terms of tissue distribution, bean-shaped accessory glands (bags).

It is found in the secreted. It carries out the reaction alpha,alpha-trehalose + H2O = alpha-D-glucose + beta-D-glucose. The chain is Trehalase from Tenebrio molitor (Yellow mealworm beetle).